The sequence spans 67 residues: Alpha-like toxin Lqh3 (67 aa).

The region spanning 2–66 (RDGYIAQPEN…GIIVEGEKCH (65 aa)) is the LCN-type CS-alpha/beta domain. 4 cysteine pairs are disulfide-bonded: cysteine 12–cysteine 65, cysteine 16–cysteine 37, cysteine 23–cysteine 47, and cysteine 27–cysteine 49. Serine 67 is subject to Serine amide.

The protein belongs to the long (4 C-C) scorpion toxin superfamily. Sodium channel inhibitor family. Alpha subfamily. Monomer. Expressed by the venom gland.

It is found in the secreted. Functionally, alpha toxins bind voltage-independently at site-3 of sodium channels (Nav) and inhibit the inactivation of the activated channels, thereby blocking neuronal transmission. The dissociation is voltage-dependent. This alpha-like toxin is highly toxic to insects and competes with LqhaIT on binding to insect sodium channels. Differs from classical anti-mammalian alpha-toxins as it inhibits sodium channel inactivation in cell bodies of hippocampus brain neurons, on which the anti-mammalian Lqh2 is inactive, and is unable to affect Nav1.2 in the rat brain, on which Lqh2 is highly active. Moreover, its pharmacological properties are unique in that its binding affinity for insect channels drops &gt;30-fold at pH 8.5 versus pH 6.5, and its rate of association with receptor site-3 on both insect and mammalian sodium channels is 4-15-fold slower compared with LqhaIT and Lqh2. In Leiurus hebraeus (Hebrew deathstalker scorpion), this protein is Alpha-like toxin Lqh3.